The chain runs to 155 residues: Transcriptional repressor NrdR (155 aa).

The segment at 3–34 (CPFCGNIDTQVKDSRPAEDHVSIRRRRFCPAC) is a zinc-finger region. The ATP-cone domain occupies 49–139 (LVVIKSSGKR…VYKNFQAADD (91 aa)).

This sequence belongs to the NrdR family. Zn(2+) serves as cofactor.

Its function is as follows. Negatively regulates transcription of bacterial ribonucleotide reductase nrd genes and operons by binding to NrdR-boxes. The chain is Transcriptional repressor NrdR from Cereibacter sphaeroides (strain ATCC 17029 / ATH 2.4.9) (Rhodobacter sphaeroides).